Consider the following 317-residue polypeptide: Beta-ketoacyl-[acyl-carrier-protein] synthase III (317 aa).

Catalysis depends on residues cysteine 112 and histidine 244. The segment at 245-249 is ACP-binding; that stretch reads QANVR. Asparagine 274 is a catalytic residue.

It belongs to the thiolase-like superfamily. FabH family. As to quaternary structure, homodimer.

It is found in the cytoplasm. It carries out the reaction malonyl-[ACP] + acetyl-CoA + H(+) = 3-oxobutanoyl-[ACP] + CO2 + CoA. Its pathway is lipid metabolism; fatty acid biosynthesis. Functionally, catalyzes the condensation reaction of fatty acid synthesis by the addition to an acyl acceptor of two carbons from malonyl-ACP. Catalyzes the first condensation reaction which initiates fatty acid synthesis and may therefore play a role in governing the total rate of fatty acid production. Possesses both acetoacetyl-ACP synthase and acetyl transacylase activities. Its substrate specificity determines the biosynthesis of branched-chain and/or straight-chain of fatty acids. In Rickettsia canadensis (strain McKiel), this protein is Beta-ketoacyl-[acyl-carrier-protein] synthase III.